Here is a 172-residue protein sequence, read N- to C-terminus: Large ribosomal subunit protein uL10 (172 aa).

Belongs to the universal ribosomal protein uL10 family. In terms of assembly, part of the ribosomal stalk of the 50S ribosomal subunit. The N-terminus interacts with L11 and the large rRNA to form the base of the stalk. The C-terminus forms an elongated spine to which L12 dimers bind in a sequential fashion forming a multimeric L10(L12)X complex.

In terms of biological role, forms part of the ribosomal stalk, playing a central role in the interaction of the ribosome with GTP-bound translation factors. This Afipia carboxidovorans (strain ATCC 49405 / DSM 1227 / KCTC 32145 / OM5) (Oligotropha carboxidovorans) protein is Large ribosomal subunit protein uL10.